A 195-amino-acid polypeptide reads, in one-letter code: Large ribosomal subunit protein bL25 (195 aa).

It belongs to the bacterial ribosomal protein bL25 family. CTC subfamily. As to quaternary structure, part of the 50S ribosomal subunit; part of the 5S rRNA/L5/L18/L25 subcomplex. Contacts the 5S rRNA. Binds to the 5S rRNA independently of L5 and L18.

This is one of the proteins that binds to the 5S RNA in the ribosome where it forms part of the central protuberance. This chain is Large ribosomal subunit protein bL25, found in Geobacter metallireducens (strain ATCC 53774 / DSM 7210 / GS-15).